The primary structure comprises 326 residues: MAQRVQLTATVSENQLGQRLDQALAEMFPDYSRSRIKEWILNQRVLVNGQLCDKPKEKVLGGERVAIDAEIDEEIRFEAQDIPLDIVYEDDDILVINKPRDLVVHPGAGNPDGTVLNALLHYYPPIADVPRAGIVHRLDKDTTGLMVVAKTVPAQTRLVESLQLREITREYEAVAIGHMTAGGTVNEPISRHPTKRTHMSVHPMGKPAVTHYRIMEHFRVHTRLRLRLETGRTHQIRVHMAHITHPLVGDQVYGGRPRPPKGASEEFISTLRKFDRQALHATMLRLYHPVSGIEMEWHAPIPQDMVDLIDAMRADFEDHKDDVDWL.

An S4 RNA-binding domain is found at glutamine 18 to aspartate 91. Residue aspartate 139 is part of the active site. The segment at glycine 183–proline 203 is disordered.

Belongs to the pseudouridine synthase RluA family.

It is found in the cytoplasm. It catalyses the reaction uridine(1911/1915/1917) in 23S rRNA = pseudouridine(1911/1915/1917) in 23S rRNA. Responsible for synthesis of pseudouridine from uracil at positions 1911, 1915 and 1917 in 23S ribosomal RNA. The protein is Ribosomal large subunit pseudouridine synthase D (rluD) of Salmonella typhi.